The following is a 139-amino-acid chain: Protein LTO1 homolog (139 aa).

Belongs to the LTO1 family.

The polypeptide is Protein LTO1 homolog (Dictyostelium discoideum (Social amoeba)).